A 1040-amino-acid chain; its full sequence is uncharacterized protein (1040 aa).

In terms of domain architecture, Helicase ATP-binding spans 403–588 (RLEESSKKGG…YSLIKFLRIK (186 aa)). ATP is bound at residue 416 to 423 (DDMGLGKT). Residues 746–798 (CSLCMDVVAELLIIVPCGHFLCRECLTHVITSSEDMAKQTSNENISPKCSVCE) form an RING-type zinc finger. A Helicase C-terminal domain is found at 866–1032 (KIEKALNAVK…ISRLNTKELS (167 aa)).

It belongs to the SNF2/RAD54 helicase family.

The protein localises to the nucleus. This is an uncharacterized protein from Schizosaccharomyces pombe (strain 972 / ATCC 24843) (Fission yeast).